Here is a 278-residue protein sequence, read N- to C-terminus: Large ribosomal subunit protein uL2 (278 aa).

Disordered stretches follow at residues 1–20 (MAIRKYKPTTPGRRGSSVSD), 25–57 (TRSTPEKSLLRPLTKSGGRNAHGRITTRHRGGG), and 224–278 (VVMN…GKKR). Composition is skewed to basic residues over residues 45–57 (AHGRITTRHRGGG) and 269–278 (VRRRKTGKKR).

It belongs to the universal ribosomal protein uL2 family. As to quaternary structure, part of the 50S ribosomal subunit. Forms a bridge to the 30S subunit in the 70S ribosome.

Functionally, one of the primary rRNA binding proteins. Required for association of the 30S and 50S subunits to form the 70S ribosome, for tRNA binding and peptide bond formation. It has been suggested to have peptidyltransferase activity; this is somewhat controversial. Makes several contacts with the 16S rRNA in the 70S ribosome. The chain is Large ribosomal subunit protein uL2 from Nocardia farcinica (strain IFM 10152).